A 346-amino-acid polypeptide reads, in one-letter code: Prepilin peptidase EppA (346 aa).

The next 10 membrane-spanning stretches (helical) occupy residues 1–21 (MFGFDNLILGVYLFNFLLILT), 31–51 (IIPHFVIILMLIVNLPIGYYF), 56–76 (AITSFFATLILCLILGVGMGG), 77–97 (GDVKMFTALSPLFAAETIYFV), 101–121 (ISILIGLSALFAAIFPMTKIL), 128–148 (IIPSSAYLAMLIGIIVSITEI), 149–169 (YSIGNTKTILWSYIILSIFIS), 182–202 (LGYITPIYLIGFYLLNPAYFV), 206–226 (VLISFFVYIGQLSLISLVIYA), and 321–341 (PFVPFVLVAYCVITLLNMGVI).

Belongs to the peptidase A24 family.

The protein localises to the cell membrane. Its function is as follows. Peptidase that processes the N-terminus of prepilins. Specifically cleaves proteins with a class III (type IV pilin-like) signal sequence, such as the major structural pilin EpdE and the minor pilins EpdA, EpdC and EpdD. Is not able to cleave the preflagellin subunit FlaB2. In Methanococcus maripaludis (strain DSM 14266 / JCM 13030 / NBRC 101832 / S2 / LL), this protein is Prepilin peptidase EppA.